We begin with the raw amino-acid sequence, 603 residues long: Prosaposin receptor GPR37 (603 aa).

An N-terminal signal peptide occupies residues 1-26 (MPAPGAPLSRTSRLLLLLLFKVSVSA). At 27 to 255 (ALSFVPEPRN…QESYGAYAVM (229 aa)) the chain is on the extracellular side. Residue asparagine 36 is glycosylated (N-linked (GlcNAc...) asparagine). Residues 39 to 232 (CLGESCSPLI…GGPRRGNSTN (194 aa)) form a disordered region. Basic and acidic residues-rich tracts occupy residues 51–79 (RSRDAGGPRNSARDALRVHVPREKLEAEV), 145–158 (TSERGEMSSKRDEI), and 165–175 (HSVKTEPEPRD). N-linked (GlcNAc...) asparagine glycans are attached at residues asparagine 212 and asparagine 229. The helical transmembrane segment at 256–276 (CLSVVIFGTGIIGNLAVMCIV) threads the bilayer. Residues 277–289 (CHNYYMRSISNSL) are Cytoplasmic-facing. The helical transmembrane segment at 290-310 (LANLAFWDFLIIFFCLPLVIF) threads the bilayer. Topologically, residues 311-325 (HELTKKWLLEDFSCK) are extracellular. An intrachain disulfide couples cysteine 324 to cysteine 409. Residues 326-346 (IVPYIEVASLGVTTFTLCALC) traverse the membrane as a helical segment. Residues 347–369 (IDRFRAATNVQMYYEMIENCSST) lie on the Cytoplasmic side of the membrane. A helical membrane pass occupies residues 370–390 (TAKLAVIWVGALLLALPEVVL). At 391 to 433 (RQLSKEDLGFSGQAPAERCVIKISPDLPDTIYVLALTYDGARL) the chain is on the extracellular side. The helical transmembrane segment at 434–454 (WWYFGCYFCLPTLFTITCSLV) threads the bilayer. Over 455-483 (TARKIRKAEKASTRGNKRQIHLESQMNCT) the chain is Cytoplasmic. A helical membrane pass occupies residues 484–504 (VVALTILYGFCIIPENICNIV). Over 505-521 (TAYMATGVSQQTMDLLN) the chain is Extracellular. A helical transmembrane segment spans residues 522–542 (IISQFLLFFKSCVTPVLLFCL). The Cytoplasmic portion of the chain corresponds to 543-603 (CRPFSRAFME…STFASVGTHC (61 aa)).

Belongs to the G-protein coupled receptor 1 family. Forms a complex with PRKN, STUB1 and HSP70. The amount of STUB1 in the complex increases during ER stress. STUB1 promotes the dissociation of HSP70 from PRKN, thus facilitating PRKN-mediated GPR37 ubiquitination. Interacts with PACRG. In terms of processing, the N-terminus is cleaved by ADAM10 metalloproteinase; mediating limited proteolysis leading to the release of receptor ectodomain by shedding. In addition, cleaved by FURIN between Arg-53 and Asp-54. Ubiquitinated by PRKN in the presence of UBE2E1 and UBE2L3 in the endoplasmic reticulum. The unfolded form is specifically ubiquitinated by SYVN1, which promotes its proteasomal degradation and prevents neuronal cell death. As to expression, highly expressed in the brain. High levels of expression were seen in fiber tracts such as the corpus callosum, anterior commissure, fornix, internal capsule, cerebral peduncles, and stria terminalis. Additionally, moderate levels of expression were seen in the pyramidal tracts and cerebellar peduncles, as well as in the spinal tract of the trigeminal nerve and the spinal fasciculi.

The protein resides in the cell projection. It is found in the dendrite. Its subcellular location is the synapse. The protein localises to the cell membrane. It localises to the endoplasmic reticulum membrane. G-protein-coupled receptor that plays a role in several physiological pathways such as resolution of inflammatory pain and oligodendrocyte differentiation. Acts as a receptor for several ligands including prosaposin, osteocalcin or neuroprotectin D1. Ligand binding induces endocytosis, followed by an ERK phosphorylation cascade. Acts as a receptor for osteocalcin (OCN) to regulate oligodendrocyte differentiation and central nervous system myelination. Mechanistically, plays a negative role in oligodendrocyte differentiation and myelination during development via activation of the ERK1/2 signaling pathway. Therefore, regulates the stability of myelin or resistance of myelin itself to demyelination. Upon activation by neuroprotectin D1 (NPD1), promotes the activation of phagocytosis in macrophages as well as the shift in cytokine release toward an anti-inflammatory profile, and thus helps to reverse inflammatory pain. In addition, the increased macrophage phagocytosis mediates protection against sepsis upon pathogen infection. Additionally, extracellular vesicles derived from efferocyte express prosaposin, which binds to macrophage GPR37 to increase expression of the efferocytosis receptor TIM4 via an ERK-AP1-dependent signaling axis, leading to increased macrophage efferocytosis efficiency and accelerated resolution of inflammation. May also act as a maturation factor of LRP6, protecting LRP6 from the endoplasmic reticulum (ER)-associated protein degradation (ERAD) and thereby promoting the Wnt/beta-catenin signaling pathway. In Rattus norvegicus (Rat), this protein is Prosaposin receptor GPR37 (Gpr37).